Reading from the N-terminus, the 122-residue chain is Large ribosomal subunit protein uL24 (122 aa).

Belongs to the universal ribosomal protein uL24 family. Part of the 50S ribosomal subunit.

Functionally, one of two assembly initiator proteins, it binds directly to the 5'-end of the 23S rRNA, where it nucleates assembly of the 50S subunit. Its function is as follows. One of the proteins that surrounds the polypeptide exit tunnel on the outside of the subunit. The protein is Large ribosomal subunit protein uL24 of Renibacterium salmoninarum (strain ATCC 33209 / DSM 20767 / JCM 11484 / NBRC 15589 / NCIMB 2235).